We begin with the raw amino-acid sequence, 316 residues long: Protoheme IX farnesyltransferase (316 aa).

Helical transmembrane passes span 32–52, 53–73, 98–118, 120–140, 153–173, 180–200, 226–246, 251–271, and 280–300; these read VMSL…THVN, PIIG…SGAL, VARE…VITL, FVAN…YVVI, IVIG…AVAG, LALF…LALV, ILLY…IGFA, GLLS…VYLA, and VAMR…AAIV.

Belongs to the UbiA prenyltransferase family. Protoheme IX farnesyltransferase subfamily.

The protein resides in the cell inner membrane. The enzyme catalyses heme b + (2E,6E)-farnesyl diphosphate + H2O = Fe(II)-heme o + diphosphate. The protein operates within porphyrin-containing compound metabolism; heme O biosynthesis; heme O from protoheme: step 1/1. In terms of biological role, converts heme B (protoheme IX) to heme O by substitution of the vinyl group on carbon 2 of heme B porphyrin ring with a hydroxyethyl farnesyl side group. The chain is Protoheme IX farnesyltransferase from Methylocella silvestris (strain DSM 15510 / CIP 108128 / LMG 27833 / NCIMB 13906 / BL2).